The chain runs to 233 residues: uncharacterized protein (233 aa).

6 consecutive transmembrane segments (helical) span residues 7–27, 36–56, 62–82, 119–139, 159–179, and 188–208; these read VPIF…LLAY, YEFE…ILIP, MFVL…KYLA, LIIA…AILM, PLYP…VGLV, and ILLA…APHI.

The protein resides in the cell membrane. This is an uncharacterized protein from Methanocaldococcus jannaschii (strain ATCC 43067 / DSM 2661 / JAL-1 / JCM 10045 / NBRC 100440) (Methanococcus jannaschii).